A 201-amino-acid polypeptide reads, in one-letter code: Phospholipase A2 inhibitor NAI (201 aa).

Residues 1-19 (MKSLQIICLLFVLVARGSC) form the signal peptide. Cystine bridges form between C22–C47, C25–C32, C40–C68, C74–C95, C96–C101, C119–C144, C137–C166, and C170–C191. N176 is a glycosylation site (N-linked (GlcNAc...) asparagine).

It belongs to the CNF-like-inhibitor family. In terms of assembly, heterotrimer of 2 subunits A and 1 subunit B; non-covalently linked. N-glycosylated, probably by biantennary structure. Glycosylation does not change PLA2 inhibitory activity. Expressed by the liver.

It localises to the secreted. In terms of biological role, inhibits the enzymatic activity of all phospholipase A2 tested, binding them with micromole to nanomole affinity. The protein is Phospholipase A2 inhibitor NAI of Notechis ater (Black tiger snake).